A 126-amino-acid polypeptide reads, in one-letter code: Large ribosomal subunit protein bL12 (126 aa).

This sequence belongs to the bacterial ribosomal protein bL12 family. In terms of assembly, homodimer. Part of the ribosomal stalk of the 50S ribosomal subunit. Forms a multimeric L10(L12)X complex, where L10 forms an elongated spine to which 2 to 4 L12 dimers bind in a sequential fashion. Binds GTP-bound translation factors.

Its function is as follows. Forms part of the ribosomal stalk which helps the ribosome interact with GTP-bound translation factors. Is thus essential for accurate translation. The chain is Large ribosomal subunit protein bL12 from Solibacter usitatus (strain Ellin6076).